The chain runs to 219 residues: Elongation factor Ts, chloroplastic (219 aa).

The protein belongs to the EF-Ts family.

Its subcellular location is the plastid. It is found in the chloroplast. Its function is as follows. Associates with the EF-Tu.GDP complex and induces the exchange of GDP to GTP. It remains bound to the aminoacyl-tRNA.EF-Tu.GTP complex up to the GTP hydrolysis stage on the ribosome. The protein is Elongation factor Ts, chloroplastic (tsf) of Guillardia theta (Cryptophyte).